Reading from the N-terminus, the 1044-residue chain is Unconventional myosin-Ic (1044 aa).

In terms of domain architecture, Myosin motor spans 28–712; it reads GVQDFVLLEN…TLFATEDSLE (685 aa). ATP is bound by residues N69, Y77, 120–129, and 173–177; these read SGESGAGKTE and NDNSS. K364 bears the N6-methyllysine mark. The residue at position 389 (S389) is a Phosphoserine. K467 is subject to N6-acetyllysine. S517 carries the post-translational modification Phosphoserine. Residues 589–611 form an actin-binding region; it reads LLQLVEILRSKEPAYIRCIKPND. 2 IQ domains span residues 715–744 and 738–767; these read RQSLATKIQAAWRGFHWRQKFLRVKRSAIC and VKRSAICIQSWWRGTLGRRKAAKRKWAAQT. 2 positions are modified to phosphoserine: S845 and S1022. Residues 866–1040 form the TH1 domain; the sequence is KDNYPQSVPR…NGHLAVVAPR (175 aa).

The protein belongs to the TRAFAC class myosin-kinesin ATPase superfamily. Myosin family. As to quaternary structure, interacts (via its IQ motifs) with CABP1 and CIB1; the interaction with CABP1 and CIB1 is calcium-dependent. Interacts (via tail domain) with PLEKHB1 (via PH domain); the interaction is not affected by the presence or absence of calcium and CALM. Interacts with POLR1A. Interacts with POLR2A. Component of the B-WICH complex, at least composed of SMARCA5/SNF2H, BAZ1B/WSTF, SF3B1, DEK, MYO1C, ERCC6, MYBBP1A and DDX21. Interacts (via its IQ motifs) with CALM; this precludes interaction with YWHAB. Interacts with YWHAB; this precludes interaction with CALM. Interacts with RPS6. Interacts with actin. Interacts with LLPH. Interacts with GLUT4. Interacts (via its IQ motifs) with SH3BGRL3; the interaction is dependent on calcium and takes place at membrane ruffles.

The protein localises to the cytoplasm. It localises to the nucleus. It is found in the cell cortex. The protein resides in the cell projection. Its subcellular location is the stereocilium membrane. The protein localises to the cytoplasmic vesicle. It localises to the ruffle membrane. Myosins are actin-based motor molecules with ATPase activity. Unconventional myosins serve in intracellular movements. Their highly divergent tails are presumed to bind to membranous compartments, which would be moved relative to actin filaments. Involved in glucose transporter recycling in response to insulin by regulating movement of intracellular GLUT4-containing vesicles to the plasma membrane. Component of the hair cell's (the sensory cells of the inner ear) adaptation-motor complex. Acts as a mediator of adaptation of mechanoelectrical transduction in stereocilia of vestibular hair cells. Binds phosphoinositides and links the actin cytoskeleton to cellular membranes. The polypeptide is Unconventional myosin-Ic (Myo1c) (Rattus norvegicus (Rat)).